The following is a 509-amino-acid chain: ATP synthase subunit alpha (509 aa).

169–176 (GDRQTGKT) is an ATP binding site.

Belongs to the ATPase alpha/beta chains family. As to quaternary structure, F-type ATPases have 2 components, CF(1) - the catalytic core - and CF(0) - the membrane proton channel. CF(1) has five subunits: alpha(3), beta(3), gamma(1), delta(1), epsilon(1). CF(0) has three main subunits: a(1), b(2) and c(9-12). The alpha and beta chains form an alternating ring which encloses part of the gamma chain. CF(1) is attached to CF(0) by a central stalk formed by the gamma and epsilon chains, while a peripheral stalk is formed by the delta and b chains.

The protein resides in the cell inner membrane. The catalysed reaction is ATP + H2O + 4 H(+)(in) = ADP + phosphate + 5 H(+)(out). In terms of biological role, produces ATP from ADP in the presence of a proton gradient across the membrane. The alpha chain is a regulatory subunit. In Brucella anthropi (strain ATCC 49188 / DSM 6882 / CCUG 24695 / JCM 21032 / LMG 3331 / NBRC 15819 / NCTC 12168 / Alc 37) (Ochrobactrum anthropi), this protein is ATP synthase subunit alpha.